Here is a 1619-residue protein sequence, read N- to C-terminus: MITNSFTNNFQFIKDTGILKDFPLSVKRILVFQTVNFLLEPPNGNTQFIVTSKEHLQWIMEITEQGFLLPIEDSQIILQCIELYKKWLFDPKHKPTPLIDDDDEYFHKKIIEHLTLIFQPRSYPHYISMSNNNSNNNSNNSNININNNNNNNNNNNNNNNNNNNNNNNNNSNNTNSGSNNKESSNNNSPILSSSNSGSGSSLSLNKDKEGGGSNSGSFLGVNQQSSPPPQQISATTTAATSPTTPTTPIKDTLQQQFLQQEVGGFNEVVQQQQQQQQQQQQQQQQQQQQQQQQQSPSITTGTVKGSKYRESVMPGSSMMVQSSTTALYSSNNYSGNVQLPNISVKELIDSHSVLCQKVLQIYLEMSRGTYSRSFSTDTLEHWNRLMLSITDCILGIHSNSDEMLARNLCPLLLKTLFEVWLQSKTLNPTLWNSLTKYAQGWFHHMPTVNQWNLTCLALTTPLVQSIYTNDHQSKSTITIRLDETSIEFEKEYLYYAWNRILNLIGNPNQIKSPAIFSEAITGIFHLVSMFLSVTNDGNAILHIFGSWIFEAVKTIKPGFDEGISLGSEILLHIFLSCSRKIEFLPIYLSCFYTCISEALWCDGKILRDTIIHSQNIFSSGLPGSRILIPSYIRALNHILTAQGTNDPELRRCAIKILGSILCLPNRYETVKFHNFFPGRTIDPYPPLPNDIIDGKHNELTLPPNEINTYDDLKPHLAYLILSALNTEMSSSNLLTLIWYIMFYQLEYQHQHVKPYPDGKLITSSFIHQSINTILKKCSSFTNQWSHDVILSSFQLLSDLASQHQRIPNFLENASTVVRKLCKFITFKCKETNMSPETEDLISLGCSTIADWVVVSPWIFEGNYLTDTSTFYMVFNALSVAMGAKSPNDIISSNASISSSVSNTGISSIGGGGSSGSGNSSQPSSTGSGSGGVDSGSKSNSSSSSSSQPSSTGGSGNNSNSANGGSFKRPKPYINNNISPKVKEVAQCALKAIMSKISYFPNPYNATPTNTSSKVTESDIITQIKAKAEKHLGIKNFPSEQSLRFYAIGDSIIITVIDQPFTSTSSSPSDSYVTLIIRDMSGKSVINSQLAFLPFKQREISEIQQPITNEKESQIDDGDDSVPTNTTATTIDNTISNNNTTTTSNNSIKSTSNNKVPIKKRSQYNCNEEPFISSYIENVEDFGDLSSYIEKHIDENFTKLIDNQMEVEKQKLFANKYSLTPSITTHPPVLKTSFNGDCKLQQARILLTHLGFLNQENRNKLTPLENSVQFFQSLNMLDSVSERVQIKIPIIYVKKGDSTEDDIYNNVTSNTTQDYQDFIASLGWLVPISTHTGFLGDLDKKNLTHGQFTPYYATHSREMVFFVSTMMPNSDIANNSSQEHKKKLINKTNVSVIWFNGSIEVYEKTLLETFPHAIQIVITPLENDLFRLKTLRKATHSNRMKTGPVNDEIIISKHILANVIRLSVVNSNQSLLNLSSGDGKTQHIYTNRKKLISDITESFKHDMTIQKFYEFHFEPLDQSQLYQNTENLPMANNFKFVKTSSVNLFRKDRTQSALIGTFTLPPPPISPTISPQPSPHLSSSGGSWASSKGGSTQPTTPSGRTSNFLSRRPNLSQSEDQSHK.

Disordered stretches follow at residues 128 to 249 (SMSN…TTPI), 289 to 316 (QQQQQQSPSITTGTVKGSKYRESVMPGS), 907 to 974 (SIGG…PYIN), and 1134 to 1153 (ISNNNTTTTSNNSIKSTSNN). Low complexity-rich tracts occupy residues 130 to 204 (SNNN…SLSL) and 231 to 249 (QISATTTAATSPTTPTTPI). Residues 265–295 (FNEVVQQQQQQQQQQQQQQQQQQQQQQQQQS) are a coiled coil. Composition is skewed to low complexity over residues 916 to 926 (SGNSSQPSSTG) and 934 to 965 (SGSKSNSSSSSSSQPSSTGGSGNNSNSANGGS). Residues 1273 to 1494 (LNMLDSVSER…TNRKKLISDI (222 aa)) form the Rap-GAP domain. Residues 1554–1619 (IGTFTLPPPP…LSQSEDQSHK (66 aa)) are disordered. Over residues 1559 to 1573 (LPPPPISPTISPQPS) the composition is skewed to pro residues. Residues 1574-1590 (PHLSSSGGSWASSKGGS) show a composition bias toward low complexity. Positions 1591–1619 (TQPTTPSGRTSNFLSRRPNLSQSEDQSHK) are enriched in polar residues.

The sequence is that of Rap-GAP domain-containing protein DDB_G0281809 from Dictyostelium discoideum (Social amoeba).